The primary structure comprises 512 residues: ATP synthase subunit alpha (512 aa).

169–176 (GDRQTGKT) is a binding site for ATP.

Belongs to the ATPase alpha/beta chains family. F-type ATPases have 2 components, CF(1) - the catalytic core - and CF(0) - the membrane proton channel. CF(1) has five subunits: alpha(3), beta(3), gamma(1), delta(1), epsilon(1). CF(0) has three main subunits: a(1), b(2) and c(9-12). The alpha and beta chains form an alternating ring which encloses part of the gamma chain. CF(1) is attached to CF(0) by a central stalk formed by the gamma and epsilon chains, while a peripheral stalk is formed by the delta and b chains.

The protein resides in the cell inner membrane. It carries out the reaction ATP + H2O + 4 H(+)(in) = ADP + phosphate + 5 H(+)(out). Functionally, produces ATP from ADP in the presence of a proton gradient across the membrane. The alpha chain is a regulatory subunit. This is ATP synthase subunit alpha from Rickettsia canadensis (strain McKiel).